A 232-amino-acid polypeptide reads, in one-letter code: 5'-methylthioadenosine/S-adenosylhomocysteine nucleosidase (232 aa).

The active-site Proton acceptor is the glutamate 12. Residues glycine 78, isoleucine 152, and 173-174 each bind substrate; that span reads ME. Aspartate 197 (proton donor) is an active-site residue.

Belongs to the PNP/UDP phosphorylase family. MtnN subfamily. As to quaternary structure, homodimer.

It carries out the reaction S-adenosyl-L-homocysteine + H2O = S-(5-deoxy-D-ribos-5-yl)-L-homocysteine + adenine. The catalysed reaction is S-methyl-5'-thioadenosine + H2O = 5-(methylsulfanyl)-D-ribose + adenine. It catalyses the reaction 5'-deoxyadenosine + H2O = 5-deoxy-D-ribose + adenine. Its pathway is amino-acid biosynthesis; L-methionine biosynthesis via salvage pathway; S-methyl-5-thio-alpha-D-ribose 1-phosphate from S-methyl-5'-thioadenosine (hydrolase route): step 1/2. Catalyzes the irreversible cleavage of the glycosidic bond in both 5'-methylthioadenosine (MTA) and S-adenosylhomocysteine (SAH/AdoHcy) to adenine and the corresponding thioribose, 5'-methylthioribose and S-ribosylhomocysteine, respectively. Also cleaves 5'-deoxyadenosine, a toxic by-product of radical S-adenosylmethionine (SAM) enzymes, into 5-deoxyribose and adenine. Thus, is required for in vivo function of the radical SAM enzymes biotin synthase and lipoic acid synthase, that are inhibited by 5'-deoxyadenosine accumulation. This chain is 5'-methylthioadenosine/S-adenosylhomocysteine nucleosidase, found in Cronobacter sakazakii (strain ATCC BAA-894) (Enterobacter sakazakii).